We begin with the raw amino-acid sequence, 461 residues long: Carboxypeptidase Rv3627c (461 aa).

Positions 1–28 (MGPTRWRKSTHVVVGAAVLAFVAVVVAA) are cleaved as a signal peptide. Catalysis depends on Ser-114, which acts as the Acyl-ester intermediate. Catalysis depends on Lys-117, which acts as the Proton acceptor. Ser-295 is an active-site residue.

The protein belongs to the peptidase S13 family.

Its function is as follows. Carboxypeptidase that cleaves terminal D-alanine from peptidoglycan in the mycobacterial cell wall. May cleave L-Lys-D-Ala and/or D-Ala-D-Ala peptide bonds. Exerts important effects on mycobacterial cell morphology and cell division. In Mycobacterium tuberculosis (strain ATCC 25618 / H37Rv), this protein is Carboxypeptidase Rv3627c.